The primary structure comprises 393 residues: Putative N(4)-(beta-N-acetylglucosaminyl)-L-asparaginase GM21137 (393 aa).

Positions methionine 1–alanine 23 are cleaved as a signal peptide. Disulfide bonds link cysteine 97–cysteine 102 and cysteine 196–cysteine 212. Catalysis depends on threonine 243, which acts as the Nucleophile. Substrate is bound by residues arginine 271–aspartate 274 and threonine 294–glycine 297. Cysteine 354 and cysteine 381 form a disulfide bridge.

This sequence belongs to the Ntn-hydrolase family. As to quaternary structure, heterotetramer of two alpha and two beta chains arranged as a dimer of alpha/beta heterodimers. In terms of processing, cleaved into an alpha and beta chain by autocatalysis; this activates the enzyme. The N-terminal residue of the beta subunit is responsible for the nucleophile hydrolase activity.

It carries out the reaction N(4)-(beta-N-acetyl-D-glucosaminyl)-L-asparagine + H2O = N-acetyl-beta-D-glucosaminylamine + L-aspartate + H(+). Cleaves the GlcNAc-Asn bond which joins oligosaccharides to the peptide of asparagine-linked glycoproteins. The polypeptide is Putative N(4)-(beta-N-acetylglucosaminyl)-L-asparaginase GM21137 (Drosophila sechellia (Fruit fly)).